We begin with the raw amino-acid sequence, 480 residues long: Protein U54 (480 aa).

This is Protein U54 from Elephas maximus (Indian elephant).